A 348-amino-acid polypeptide reads, in one-letter code: Phenylalanine--tRNA ligase alpha subunit (348 aa).

Glutamate 259 provides a ligand contact to Mg(2+).

The protein belongs to the class-II aminoacyl-tRNA synthetase family. Phe-tRNA synthetase alpha subunit type 1 subfamily. In terms of assembly, tetramer of two alpha and two beta subunits. It depends on Mg(2+) as a cofactor.

Its subcellular location is the cytoplasm. It catalyses the reaction tRNA(Phe) + L-phenylalanine + ATP = L-phenylalanyl-tRNA(Phe) + AMP + diphosphate + H(+). The polypeptide is Phenylalanine--tRNA ligase alpha subunit (Limosilactobacillus reuteri (strain DSM 20016) (Lactobacillus reuteri)).